A 41-amino-acid chain; its full sequence is Large ribosomal subunit protein bL36 (41 aa).

It belongs to the bacterial ribosomal protein bL36 family.

The polypeptide is Large ribosomal subunit protein bL36 (Chelativorans sp. (strain BNC1)).